The primary structure comprises 203 residues: Large ribosomal subunit protein bL25 (203 aa).

The protein belongs to the bacterial ribosomal protein bL25 family. CTC subfamily. In terms of assembly, part of the 50S ribosomal subunit; part of the 5S rRNA/L5/L18/L25 subcomplex. Contacts the 5S rRNA. Binds to the 5S rRNA independently of L5 and L18.

Its function is as follows. This is one of the proteins that binds to the 5S RNA in the ribosome where it forms part of the central protuberance. In Cereibacter sphaeroides (strain ATCC 17029 / ATH 2.4.9) (Rhodobacter sphaeroides), this protein is Large ribosomal subunit protein bL25.